The sequence spans 231 residues: Cuticle protein LPCP-23 (231 aa).

An N-terminal signal peptide occupies residues 1 to 17; the sequence is MAFKFVVFAAALAYANA. Repeat copies occupy residues 130–133 and 199–202.

Functionally, component of the cuticle of Tenebrio molitor. This is Cuticle protein LPCP-23 (LPCP-23) from Tenebrio molitor (Yellow mealworm beetle).